We begin with the raw amino-acid sequence, 465 residues long: ATP synthase subunit beta (465 aa).

ATP is bound at residue 154 to 161; that stretch reads GGAGVGKT.

This sequence belongs to the ATPase alpha/beta chains family. As to quaternary structure, F-type ATPases have 2 components, CF(1) - the catalytic core - and CF(0) - the membrane proton channel. CF(1) has five subunits: alpha(3), beta(3), gamma(1), delta(1), epsilon(1). CF(0) has three main subunits: a(1), b(2) and c(9-12). The alpha and beta chains form an alternating ring which encloses part of the gamma chain. CF(1) is attached to CF(0) by a central stalk formed by the gamma and epsilon chains, while a peripheral stalk is formed by the delta and b chains.

It is found in the cell inner membrane. The catalysed reaction is ATP + H2O + 4 H(+)(in) = ADP + phosphate + 5 H(+)(out). In terms of biological role, produces ATP from ADP in the presence of a proton gradient across the membrane. The catalytic sites are hosted primarily by the beta subunits. The polypeptide is ATP synthase subunit beta (Methylobacillus flagellatus (strain ATCC 51484 / DSM 6875 / VKM B-1610 / KT)).